We begin with the raw amino-acid sequence, 194 residues long: Imidazoleglycerol-phosphate dehydratase (194 aa).

Belongs to the imidazoleglycerol-phosphate dehydratase family.

The protein localises to the cytoplasm. It carries out the reaction D-erythro-1-(imidazol-4-yl)glycerol 3-phosphate = 3-(imidazol-4-yl)-2-oxopropyl phosphate + H2O. It functions in the pathway amino-acid biosynthesis; L-histidine biosynthesis; L-histidine from 5-phospho-alpha-D-ribose 1-diphosphate: step 6/9. The sequence is that of Imidazoleglycerol-phosphate dehydratase from Bacillus subtilis (strain 168).